A 495-amino-acid chain; its full sequence is Lysine--tRNA ligase (495 aa).

Mg(2+) contacts are provided by glutamate 406 and glutamate 413.

This sequence belongs to the class-II aminoacyl-tRNA synthetase family. As to quaternary structure, homodimer. Mg(2+) serves as cofactor.

The protein resides in the cytoplasm. The catalysed reaction is tRNA(Lys) + L-lysine + ATP = L-lysyl-tRNA(Lys) + AMP + diphosphate. This chain is Lysine--tRNA ligase, found in Staphylococcus aureus (strain MW2).